A 405-amino-acid chain; its full sequence is Glucose-1-phosphate adenylyltransferase (405 aa).

Residues Tyr-96, Gly-161, 176–177 (EK), and Ser-194 contribute to the alpha-D-glucose 1-phosphate site.

It belongs to the bacterial/plant glucose-1-phosphate adenylyltransferase family. Homotetramer.

It catalyses the reaction alpha-D-glucose 1-phosphate + ATP + H(+) = ADP-alpha-D-glucose + diphosphate. It functions in the pathway glycan biosynthesis; glycogen biosynthesis. Involved in the biosynthesis of ADP-glucose, a building block required for the elongation reactions to produce glycogen. Catalyzes the reaction between ATP and alpha-D-glucose 1-phosphate (G1P) to produce pyrophosphate and ADP-Glc. This is Glucose-1-phosphate adenylyltransferase from Photobacterium profundum (strain SS9).